The primary structure comprises 1802 residues: Non-reducing polyketide synthase nscA (1802 aa).

The tract at residues 27–261 is N-terminal acylcarrier protein transacylase domain (SAT); it reads DLFRRLDQHS…PLPVYDGLCH (235 aa). The region spanning 396 to 829 is the Ketosynthase family 3 (KS3) domain; it reads SSKLAIVGMA…GGNTTLLLED (434 aa). Catalysis depends on for beta-ketoacyl synthase activity residues Cys-569, His-704, and His-747. A malonyl-CoA:ACP transacylase (MAT) domain region spans residues 935-1235; it reads FTGQGAYYHG…SASAIPSCRR (301 aa). Residues 1322-1641 are product template (PT) domain; sequence TSLVHQITAE…RLLMDRFFSP (320 aa). The N-terminal hotdog fold stretch occupies residues 1326–1462; it reads HQITAETVEA…ATIRFEDPEA (137 aa). The PKS/mFAS DH domain occupies 1326 to 1636; it reads HQITAETVEA…FRRVPRLLMD (311 aa). Residue His-1358 is the Proton acceptor; for dehydratase activity of the active site. Residues 1490–1636 are C-terminal hotdog fold; that stretch reads ASRLSKPLAY…FRRVPRLLMD (147 aa). The active-site Proton donor; for dehydratase activity is Asp-1547. The interval 1699 to 1729 is disordered; it reads LLATSSKSSTPKESPIVTPAESERAEPVDNS. Over residues 1702-1713 the composition is skewed to low complexity; it reads TSSKSSTPKESP. In terms of domain architecture, Carrier spans 1725–1802; the sequence is PVDNSMTSQC…EMTAWIEEYC (78 aa). Residue Ser-1762 is modified to O-(pantetheine 4'-phosphoryl)serine.

The cofactor is pantetheine 4'-phosphate.

The protein operates within secondary metabolite biosynthesis. Non-reducing polyketide synthase; part of the gene cluster that mediates the biosynthesis of neosartoricin B, a prenylated anthracenone that probably exhibits T-cell antiproliferative activity, suggestive of a physiological role as an immunosuppressive agent. The non-reducing polyketide synthase nscA probably synthesizes and cyclizes the decaketide backbone. The hydrolase nscB then mediates the product release through hydrolysis followed by spontaneous decarboxylation. The prenyltransferase nscD catalyzes the addition of the dimethylallyl group to the aromatic C5. The FAD-dependent monooxygenase nscC is then responsible for the stereospecific hydroxylation at C2. Neosartoricin B can be converted into two additional compounds neosartoricins C and D. Neosartoricin C is a spirocyclic compound that is cyclized through the attack of C3 hydroxyl on C14, followed by dehydration. On the other hand, neosartoricin D is a further cyclized compound in which attack of C2 on C14 in neosartoricin C results in the formation of the acetal-containing dioxabicyclo-octanone ring. Both of these compounds are novel and possibly represent related metabolites of the gene cluster. The protein is Non-reducing polyketide synthase nscA of Trichophyton tonsurans (strain CBS 112818) (Scalp ringworm fungus).